A 499-amino-acid polypeptide reads, in one-letter code: CD-NTase-associated protein 4 (499 aa).

An N-terminal endonuclease domain region spans residues 1-226; sequence MATSVLANWH…DFRFDGAARA (226 aa). Residues Asp-49 and Gln-72 contribute to the active site. Asp-49 lines the Mg(2+) pocket. Ile-73 lines the Mg(2+) pocket. Lys-74 is a catalytic residue. The interval 258-464 is C-terminal SAVED domain; sequence FRNVALRSFS…HIFSAAPNAV (207 aa).

It belongs to the Cap4 nuclease family. In terms of assembly, a monomer in the absence of ligand, in its presence it forms oligomers. It depends on Mg(2+) as a cofactor.

DNase activity is activated upon ligand binding (cAAG). Inhibited by EDTA. Its function is as follows. Effector DNase of a CBASS antivirus system. CBASS (cyclic oligonucleotide-based antiphage signaling system) provides immunity against bacteriophages. The CD-NTase protein (CdnD) synthesizes cyclic nucleotides in response to infection; these serve as specific second messenger signals. The signals activate a diverse range of effectors, leading to bacterial cell death and thus abortive phage infection. A type II-C(AAG) CBASS system. In terms of biological role, binds second messenger 3',3',3'-cyclic AMP-AMP-GMP (cAAG). In the presence of cAAG (synthesized by the cognate CD-NTase protein in the CBASS operon), endonucleolytically degrades dsDNA to approximately 17 bp length fragments, with a preference for 5'-C|NG sites. Only binds DNA in the presence of cAAG. Not activated by c-di-AMP, c-di-GMP, 3',3'-cyclic GMP-AMP (cGAMP) or the second messenger of A.baumanii strain ATCC 27244. Protects E.coli against phage T2 infection. When the cdnD-cap2-cap3-cap4 operon is introduced in E.coli there is a more than 10(3) decrease in the efficiency of T2 plaque formation. The operon does not protect against phage T5 and only about 10-fold against T7. Expression of cdnD-cap4 alone protects E.coli against phage T2 infection. The sequence is that of CD-NTase-associated protein 4 from Enterobacter hormaechei subsp. hoffmannii (strain UCI 50).